The following is a 293-amino-acid chain: Single-pass membrane and coiled-coil domain-containing protein 2 (293 aa).

Residues 116–188 are a coiled coil; that stretch reads KNLLEFLLKD…SAKLRMYQME (73 aa). The helical transmembrane segment at 234-254 threads the bilayer; sequence IFIMFYVLTVTGLLCYILFFG.

Its subcellular location is the membrane. This Macaca fascicularis (Crab-eating macaque) protein is Single-pass membrane and coiled-coil domain-containing protein 2 (SMCO2).